Here is a 506-residue protein sequence, read N- to C-terminus: Catalase (506 aa).

Catalysis depends on residues His73 and Asn146. Tyr356 provides a ligand contact to heme. A Microbody targeting signal motif is present at residues 504–506 (SKF).

The protein belongs to the catalase family. Homotetramer. The cofactor is heme.

It is found in the peroxisome matrix. The catalysed reaction is 2 H2O2 = O2 + 2 H2O. Its function is as follows. Catalyzes the degradation of hydrogen peroxide (H(2)O(2)) generated by peroxisomal oxidases to water and oxygen, thereby protecting cells from the toxic effects of hydrogen peroxide. This chain is Catalase (Cat), found in Drosophila melanogaster (Fruit fly).